The primary structure comprises 162 residues: Large ribosomal subunit protein bL17 (162 aa).

The tract at residues 126–162 (KKEEVKTKSRRGGKAKKAEPTTEAPANTTEETTDSAE) is disordered. Low complexity predominate over residues 146–155 (TTEAPANTTE).

The protein belongs to the bacterial ribosomal protein bL17 family. In terms of assembly, part of the 50S ribosomal subunit. Contacts protein L32.

This Flavobacterium psychrophilum (strain ATCC 49511 / DSM 21280 / CIP 103535 / JIP02/86) protein is Large ribosomal subunit protein bL17.